The following is a 398-amino-acid chain: Probable aminomethyltransferase (398 aa).

Belongs to the GcvT family. The glycine cleavage system is composed of four proteins: P, T, L and H.

The enzyme catalyses N(6)-[(R)-S(8)-aminomethyldihydrolipoyl]-L-lysyl-[protein] + (6S)-5,6,7,8-tetrahydrofolate = N(6)-[(R)-dihydrolipoyl]-L-lysyl-[protein] + (6R)-5,10-methylene-5,6,7,8-tetrahydrofolate + NH4(+). The glycine cleavage system catalyzes the degradation of glycine. The chain is Probable aminomethyltransferase from Thermococcus gammatolerans (strain DSM 15229 / JCM 11827 / EJ3).